We begin with the raw amino-acid sequence, 356 residues long: Peptide chain release factor 1 (356 aa).

An N5-methylglutamine modification is found at glutamine 233.

Belongs to the prokaryotic/mitochondrial release factor family. Methylated by PrmC. Methylation increases the termination efficiency of RF1.

It localises to the cytoplasm. Functionally, peptide chain release factor 1 directs the termination of translation in response to the peptide chain termination codons UAG and UAA. The polypeptide is Peptide chain release factor 1 (Bacillus licheniformis (strain ATCC 14580 / DSM 13 / JCM 2505 / CCUG 7422 / NBRC 12200 / NCIMB 9375 / NCTC 10341 / NRRL NRS-1264 / Gibson 46)).